The chain runs to 141 residues: Nucleoside diphosphate kinase (141 aa).

Residues Lys-11, Phe-59, Arg-87, Thr-93, Arg-104, and Asn-114 each contribute to the ATP site. The Pros-phosphohistidine intermediate role is filled by His-117.

This sequence belongs to the NDK family. Homotetramer. Mg(2+) serves as cofactor.

The protein resides in the cytoplasm. It carries out the reaction a 2'-deoxyribonucleoside 5'-diphosphate + ATP = a 2'-deoxyribonucleoside 5'-triphosphate + ADP. The enzyme catalyses a ribonucleoside 5'-diphosphate + ATP = a ribonucleoside 5'-triphosphate + ADP. In terms of biological role, major role in the synthesis of nucleoside triphosphates other than ATP. The ATP gamma phosphate is transferred to the NDP beta phosphate via a ping-pong mechanism, using a phosphorylated active-site intermediate. The sequence is that of Nucleoside diphosphate kinase from Burkholderia multivorans (strain ATCC 17616 / 249).